Reading from the N-terminus, the 161-residue chain is Phosphopantetheine adenylyltransferase (161 aa).

A substrate-binding site is contributed by Ser-11. ATP is bound by residues 11–12 (SF) and His-19. Substrate-binding residues include Lys-43, Leu-75, and Arg-89. Residues 90 to 92 (GLR), Glu-100, and 125 to 131 (YSYLSSS) each bind ATP.

Belongs to the bacterial CoaD family. As to quaternary structure, homohexamer. It depends on Mg(2+) as a cofactor.

It is found in the cytoplasm. The catalysed reaction is (R)-4'-phosphopantetheine + ATP + H(+) = 3'-dephospho-CoA + diphosphate. It participates in cofactor biosynthesis; coenzyme A biosynthesis; CoA from (R)-pantothenate: step 4/5. In terms of biological role, reversibly transfers an adenylyl group from ATP to 4'-phosphopantetheine, yielding dephospho-CoA (dPCoA) and pyrophosphate. This chain is Phosphopantetheine adenylyltransferase, found in Geotalea daltonii (strain DSM 22248 / JCM 15807 / FRC-32) (Geobacter daltonii).